A 114-amino-acid polypeptide reads, in one-letter code: Putative cysteine proteinase inhibitor 9 (114 aa).

A signal peptide spans Met1–Ala23.

The protein belongs to the cystatin family. Phytocystatin subfamily.

The protein resides in the secreted. Functionally, specific inhibitor of cysteine proteinases. Probably involved in the regulation of endogenous processes and in defense against pests and pathogens. This is Putative cysteine proteinase inhibitor 9 from Oryza sativa subsp. japonica (Rice).